The sequence spans 536 residues: Sensory rhodopsin I transducer (536 aa).

Over 2-14 (TIAWARRRYGVKL) the chain is Cytoplasmic. Residues 15 to 29 (GLGYIATAGLLVGVG) form a helical membrane-spanning segment. Residues 30–39 (VTTNDVPSTI) lie on the Extracellular side of the membrane. The chain crosses the membrane as a helical span at residues 40-55 (VAGIAGLLTLGSINAA). The region spanning 55-107 (AETVASIKEIAAQTERVANGNLEQEVTSTRTDEFGSLADSIEQMRQSLRGRLN) is the HAMP 1 domain. Residues 56-536 (ETVASIKEIA…MRAGADGGGA (481 aa)) lie on the Cytoplasmic side of the membrane. The tract at residues 116 to 145 (LEETQAEAETAREEAEQAKQEAQAAEREAR) is disordered. Positions 124–145 (ETAREEAEQAKQEAQAAEREAR) are enriched in basic and acidic residues. The HAMP 2 domain maps to 149–202 (ATYQDTAKRYGETMEAAATGDLTQRVDVDTDHEAMETVGTAFNQMMDDLQATVR). Residues 221–459 (TSADIEASAG…STATSVERVA (239 aa)) form the Methyl-accepting transducer domain. A Glutamate methyl ester (Glu) modification is found at Glu266. Residues 278 to 307 (SEDVATASDAARDSSKSALDEMSSIETEVD) form a disordered region. Basic and acidic residues predominate over residues 287–296 (AARDSSKSAL). Glu473 bears the Glutamate methyl ester (Glu) mark. The interval 512–536 (TEDSETAGGSVEQPVMRAGADGGGA) is disordered.

The protein belongs to the methyl-accepting chemotaxis (MCP) protein family. Post-translationally, methylated by CheR.

It is found in the cell membrane. In terms of biological role, transduces signals from the phototaxis receptor sensory rhodopsin I (SR-I) to the flagellar motor. Responds to light changes through the variation of the level of methylation. The sequence is that of Sensory rhodopsin I transducer (htr1) from Halobacterium salinarum (strain ATCC 29341 / DSM 671 / R1).